Here is a 115-residue protein sequence, read N- to C-terminus: Large ribosomal subunit protein uL24 (115 aa).

Belongs to the universal ribosomal protein uL24 family. Part of the 50S ribosomal subunit.

In terms of biological role, one of two assembly initiator proteins, it binds directly to the 5'-end of the 23S rRNA, where it nucleates assembly of the 50S subunit. Functionally, one of the proteins that surrounds the polypeptide exit tunnel on the outside of the subunit. The polypeptide is Large ribosomal subunit protein uL24 (Beutenbergia cavernae (strain ATCC BAA-8 / DSM 12333 / CCUG 43141 / JCM 11478 / NBRC 16432 / NCIMB 13614 / HKI 0122)).